The chain runs to 1335 residues: Regulatory-associated protein of mTOR (1335 aa).

Ser44 and Ser122 each carry phosphoserine. Ser696 carries the post-translational modification Phosphoserine; by MAPK8. O-linked (GlcNAc) threonine glycosylation occurs at Thr700. Phosphothreonine; by MAPK8 is present on Thr706. Residues Ser719 and Ser721 each carry the phosphoserine; by RPS6KA1 modification. The residue at position 722 (Ser722) is a Phosphoserine; by AMPK and RPS6KA1. At Ser738 the chain carries Phosphoserine. Residues 749 to 771 (GSSVAFSPGNLSTSSSASSTLGS) form a disordered region. Positions 755–771 (SPGNLSTSSSASSTLGS) are enriched in low complexity. At Ser791 the chain carries Phosphoserine. Ser792 is modified (phosphoserine; by AMPK). Residues Ser836 and Ser855 each carry the phosphoserine modification. Over residues 853–866 (TSSLTQSAPASPTN) the composition is skewed to polar residues. The segment at 853-942 (TSSLTQSAPA…GPDQTTDDAD (90 aa)) is disordered. Phosphoserine; by MTOR is present on Ser859. Phosphoserine; by MAPK8, MTOR and NLK is present on Ser863. Thr865 carries the post-translational modification Phosphothreonine. Residue Ser877 is modified to Phosphoserine. Over residues 877-887 (SPPASSTSSCS) the composition is skewed to low complexity. Residues 888–898 (LTNDVAKQTVS) show a composition bias toward polar residues. Glycyl lysine isopeptide (Lys-Gly) (interchain with G-Cter in ubiquitin) cross-links involve residues Lys932 and Lys948. Ser982 carries the post-translational modification Phosphoserine. 7 WD repeats span residues 1020-1061 (NRNP…DYFH), 1065-1106 (PRYT…EKNP), 1121-1160 (TTRG…KVQD), 1164-1203 (GADS…SECR), 1209-1249 (EHTA…SVNV), 1251-1291 (QIVK…NNIK), and 1299-1335 (QRVG…KRVR). Lys1097 is subject to N6-acetyllysine.

This sequence belongs to the WD repeat RAPTOR family. In terms of assembly, part of the mechanistic target of rapamycin complex 1 (mTORC1) which contains MTOR, MLST8 and RPTOR. mTORC1 associates with AKT1S1/PRAS40, which inhibits its activity. mTORC1 associates with DEPTOR, which regulates its activity. mTORC1 binds to and is inhibited by FKBP12-rapamycin. Forms a complex with MTOR under both leucine-rich and -poor conditions. Interacts with (via TOS motifs) EIF4EBP1 and RPS6KB1; interaction is independent of its association with MTOR. Binds preferentially to poorly or non-phosphorylated forms of EIF4EBP1, and this binding is critical to the ability of MTOR to catalyze phosphorylation. Interacts with ULK1 in a nutrient-dependent manner; the interaction is reduced during starvation. Interacts with GTP-bound form of RagA/RRAGA or RagB/RRAGB and GDP-bound form of RagC/RRAGC or RagD/RRAGD, promoting recruitment of mTORC1 to the lysosomes. Interacts (when phosphorylated by AMPK) with 14-3-3 protein, leading to inhibition of its activity. Interacts with SPAG5; SPAG5 competes with MTOR for RPTOR-binding, resulting in decreased mTORC1 formation. Interacts with WAC; WAC positively regulates MTOR activity by promoting the assembly of the TTT complex composed of TELO2, TTI1 and TTI2 and the RUVBL complex composed of RUVBL1 and RUVBL2 into the TTT-RUVBL complex which leads to the dimerization of the mTORC1 complex and its subsequent activation. Interacts with G3BP1. The complex formed with G3BP1 and SPAG5 is increased by oxidative stress. Interacts with HTR6. Interacts with PIH1D1. Interacts with LARP1. Interacts with BRAT1. Interacts with SIK3. Interacts with SLC38A7; this interaction mediates the recruitment of mTORC1 to the lysosome and its subsequent activation. Post-translationally, insulin-stimulated phosphorylation at Ser-863 by MTOR and MAPK8 regulates mTORC1 activity. Phosphorylated at Ser-863 by NLK in response to stress, disrupting the interaction with small GTPases Rag (RagA/RRAGA, RagB/RRAGB, RagC/RRAGC and/or RagD/RRAGD), thereby preventing lysosome recruitment and activation of the mTORC1 complex. Osmotic stress also induces phosphorylation at Ser-696, Thr-706 and Ser-863 by MAPK8. Ser-863 phosphorylation is required for phosphorylation at Ser-855 and Ser-859. In response to nutrient limitation, phosphorylated at Ser-722 and Ser-792 by AMPK; phosphorylation promotes interaction with 14-3-3 proteins, leading to negative regulation of the mTORC1 complex. Phosphorylation at Ser-722 and Ser-792 by AMPK in response to glucose starvation inhibits O-GlcNAcylation by OGT and subsequent activation of mTORC1. In response to growth factors, phosphorylated at Ser-719, Ser-721 and Ser-722 by RPS6KA1, which stimulates mTORC1 activity. Phosphorylation at Ser-791 by PKA downstream of cAMP inhibits the mTORC1 complex. Phosphorylated at Ser-877 by TBK1, leading to negative regulation of the mTORC1 complex. O-GlcNAcylated by OGT upon glucose sufficiency, promoting interaction with small GTPases Rag (RagA/RRAGA, RagB/RRAGB, RagC/RRAGC and/or RagD/RRAGD) and subsequent recruitment of mTORC1 to lysosomal membranes, leading to activation of the mTORC1 complex. Phosphorylation at Ser-722 and Ser-792 by AMPK in response to glucose starvation inhibits O-GlcNAcylation. In terms of processing, acetylation at Lys-1097 by EP300/p300 in response to leucine metabolite acetyl-coA promotes its activity, leading to activation of the mTORC1 complex. Acetylation is decreased in response to fasting. Phosphorylated at Ser-877 by TBK1, leading to negative regulation of the mTORC1 complex. Post-translationally, ubiquitinated, leading to its degradation by the proteasome. Deubiquitinated by OTUB1 via a non-catalytic mechanism. Ubiquitinated by an E3 ubiquitin ligase complex containing VHL.

It is found in the cytoplasm. The protein resides in the lysosome. It localises to the cytoplasmic granule. Functionally, component of the mechanistic target of rapamycin complex 1 (mTORC1), an evolutionarily conserved central nutrient sensor that stimulates anabolic reactions and macromolecule biosynthesis to promote cellular biomass generation and growth. In response to nutrients, growth factors or amino acids, mTORC1 is recruited to the lysosome membrane and promotes protein, lipid and nucleotide synthesis by phosphorylating several substrates, such as ribosomal protein S6 kinase (RPS6KB1 and RPS6KB2) and EIF4EBP1 (4E-BP1). In the same time, it inhibits catabolic pathways by phosphorylating the autophagy initiation components ULK1 and ATG13, as well as transcription factor TFEB, a master regulators of lysosomal biogenesis and autophagy. The mTORC1 complex is inhibited in response to starvation and amino acid depletion. Within the mTORC1 complex, RPTOR acts both as a molecular adapter, which (1) mediates recruitment of mTORC1 to lysosomal membranes via interaction with small GTPases Rag (RagA/RRAGA, RagB/RRAGB, RagC/RRAGC and/or RagD/RRAGD), and a (2) substrate-specific adapter, which promotes substrate specificity by binding to TOS motif-containing proteins and direct them towards the active site of the MTOR kinase domain for phosphorylation. mTORC1 complex regulates many cellular processes, such as odontoblast and osteoclast differentiation or neuronal transmission. mTORC1 complex in excitatory neuronal transmission is required for the prosocial behavior induced by the psychoactive substance lysergic acid diethylamide (LSD). This Mus musculus (Mouse) protein is Regulatory-associated protein of mTOR.